A 220-amino-acid chain; its full sequence is Fructose-6-phosphate aldolase 1 (220 aa).

Residue Lys85 is the Schiff-base intermediate with substrate of the active site.

Belongs to the transaldolase family. Type 3A subfamily. In terms of assembly, homodecamer. Five subunits are arranged as a pentamer, and two ring-like pentamers pack like a donut to form the decamer.

The protein resides in the cytoplasm. The enzyme catalyses beta-D-fructose 6-phosphate = dihydroxyacetone + D-glyceraldehyde 3-phosphate. Its activity is regulated as follows. Inhibited by glycerol, inorganic phosphate and arabinose 5-phosphate. Catalyzes the reversible formation of fructose 6-phosphate from dihydroxyacetone (DHA) and D-glyceraldehyde 3-phosphate via an aldolization reaction. Can utilize several aldehydes as acceptor compounds in vitro, and hydroxyacetone (HA) or 1-hydroxy-butan-2-one as alternative donor substrate. Is also able to catalyze the direct stereoselective self-aldol addition of glycolaldehyde to furnish D-(-)-threose, and cross-aldol reactions of glycolaldehyde to other aldehyde acceptors. Is not able to cleave fructose, fructose 1-phosphate, glucose 6-phosphate, sedoheptulose 1,7-bisphosphate, xylulose 5-phosphate, ribulose 5-phosphate, and fructose 1,6-bisphosphate; cannot use dihydroxyacetone phosphate as donor compound nor D-glyceraldehyde as acceptor. Does not display transaldolase activity. The sequence is that of Fructose-6-phosphate aldolase 1 (fsaA) from Escherichia coli (strain K12).